The following is a 342-amino-acid chain: BAG family molecular chaperone regulator 1 (342 aa).

The tract at residues 1–41 (MMKMMRNKPTNLPTAGMTNGGRGSGGGGGGGGRESGGRDLE) is disordered. Residues 8 to 17 (KPTNLPTAGM) are compositionally biased toward polar residues. Residues 18 to 34 (TNGGRGSGGGGGGGGRE) are compositionally biased toward gly residues. The Ubiquitin-like domain maps to 65–141 (PMIRVRIKYG…MVLIEDPLSQ (77 aa)). The BAG domain occupies 160 to 238 (AISDISLEVD…NYVETLDALK (79 aa)). Ser-298 is modified (phosphoserine).

As to quaternary structure, binds to the ATPase domain of HSP70/HSC70 chaperones.

Co-chaperone that regulates diverse cellular pathways, such as programmed cell death and stress responses. The sequence is that of BAG family molecular chaperone regulator 1 (BAG1) from Arabidopsis thaliana (Mouse-ear cress).